We begin with the raw amino-acid sequence, 162 residues long: Endoribonuclease YbeY (162 aa).

Residues His-117, His-121, and His-127 each contribute to the Zn(2+) site.

The protein belongs to the endoribonuclease YbeY family. The cofactor is Zn(2+).

It localises to the cytoplasm. Its function is as follows. Single strand-specific metallo-endoribonuclease involved in late-stage 70S ribosome quality control and in maturation of the 3' terminus of the 16S rRNA. The protein is Endoribonuclease YbeY of Francisella tularensis subsp. holarctica (strain OSU18).